The chain runs to 394 residues: 1-acylglycerol-3-phosphate O-acyltransferase ICT1 (394 aa).

An AB hydrolase-1 domain is found at 74-381 (VLIHGYAASS…AGHNLFLDNP (308 aa)). The HXXXXD motif motif lies at 374–379 (HNLFLD).

Belongs to the peptidase S33 family. ABHD4/ABHD5 subfamily.

The catalysed reaction is a 1-acyl-sn-glycero-3-phosphate + an acyl-CoA = a 1,2-diacyl-sn-glycero-3-phosphate + CoA. In terms of biological role, lysophosphatidic acid acyltransferase involved in membrane remodeling leading to increased organic solvent tolerance. Involved in resistance to azoles and copper. The sequence is that of 1-acylglycerol-3-phosphate O-acyltransferase ICT1 (ICT1) from Saccharomyces cerevisiae (strain ATCC 204508 / S288c) (Baker's yeast).